A 268-amino-acid chain; its full sequence is Cytochrome b-c1 complex subunit Rieske-5, mitochondrial (268 aa).

The transit peptide at 1-56 (MLRIAGRKLSSSAAARSSSAFFTRNPFTFTDDSSSPTRSPSPTSLASQFLDQFRGF) directs the protein to the mitochondrion. Topologically, residues 57 to 105 (SSNSVSPAHQTGLVSDLPATVAAIKNPSSKIVYDDSNHERYPPGDPSKR) are mitochondrial matrix. A helical transmembrane segment spans residues 106-128 (AFAYFVLTGGRFVYASLVRLLIL). Topologically, residues 129–268 (KFVLSMSASK…FMEENKLLIG (140 aa)) are mitochondrial intermembrane. Residues 178-266 (INLANSVDLG…YSFMEENKLL (89 aa)) enclose the Rieske domain. Positions 211, 213, 230, and 233 each coordinate [2Fe-2S] cluster. An intrachain disulfide couples Cys216 to Cys232.

Belongs to the Rieske iron-sulfur protein family. Component of the ubiquinol-cytochrome c oxidoreductase (cytochrome b-c1 complex, complex III, CIII), a multisubunit enzyme composed of 3 respiratory subunits cytochrome b, cytochrome c1 and Rieske protein, 2 core protein subunits, and several low-molecular weight protein subunits. The complex exists as an obligatory dimer and forms supercomplexes (SCs) in the inner mitochondrial membrane with cytochrome c oxidase (complex IV, CIV). Requires [2Fe-2S] cluster as cofactor. As to expression, high levels are seen in the flowers while a low level expression is seen in the roots, leaves and stems.

Its subcellular location is the mitochondrion inner membrane. The enzyme catalyses a quinol + 2 Fe(III)-[cytochrome c](out) = a quinone + 2 Fe(II)-[cytochrome c](out) + 2 H(+)(out). Component of the ubiquinol-cytochrome c oxidoreductase, a multisubunit transmembrane complex that is part of the mitochondrial electron transport chain which drives oxidative phosphorylation. The respiratory chain contains 3 multisubunit complexes succinate dehydrogenase (complex II, CII), ubiquinol-cytochrome c oxidoreductase (cytochrome b-c1 complex, complex III, CIII) and cytochrome c oxidase (complex IV, CIV), that cooperate to transfer electrons derived from NADH and succinate to molecular oxygen, creating an electrochemical gradient over the inner membrane that drives transmembrane transport and the ATP synthase. The cytochrome b-c1 complex catalyzes electron transfer from ubiquinol to cytochrome c, linking this redox reaction to translocation of protons across the mitochondrial inner membrane, with protons being carried across the membrane as hydrogens on the quinol. In the process called Q cycle, 2 protons are consumed from the matrix, 4 protons are released into the intermembrane space and 2 electrons are passed to cytochrome c. The Rieske protein is a catalytic core subunit containing a [2Fe-2S] iron-sulfur cluster. It cycles between 2 conformational states during catalysis to transfer electrons from the quinol bound in the Q(0) site in cytochrome b to cytochrome c1. The chain is Cytochrome b-c1 complex subunit Rieske-5, mitochondrial from Nicotiana tabacum (Common tobacco).